We begin with the raw amino-acid sequence, 131 residues long: Small ribosomal subunit protein uS8 (131 aa).

The protein belongs to the universal ribosomal protein uS8 family. In terms of assembly, part of the 30S ribosomal subunit. Contacts proteins S5 and S12.

Functionally, one of the primary rRNA binding proteins, it binds directly to 16S rRNA central domain where it helps coordinate assembly of the platform of the 30S subunit. The chain is Small ribosomal subunit protein uS8 from Wolinella succinogenes (strain ATCC 29543 / DSM 1740 / CCUG 13145 / JCM 31913 / LMG 7466 / NCTC 11488 / FDC 602W) (Vibrio succinogenes).